A 154-amino-acid polypeptide reads, in one-letter code: Myoglobin (154 aa).

One can recognise a Globin domain in the interval 2 to 148; the sequence is GLSDGEWQLV…FRNDMAAKYK (147 aa). A Phosphoserine modification is found at Ser-4. Position 65 (His-65) interacts with nitrite. His-65 is a binding site for O2. At Thr-68 the chain carries Phosphothreonine. His-94 lines the heme b pocket.

This sequence belongs to the globin family. As to quaternary structure, monomeric.

Its subcellular location is the cytoplasm. It localises to the sarcoplasm. The enzyme catalyses Fe(III)-heme b-[protein] + nitric oxide + H2O = Fe(II)-heme b-[protein] + nitrite + 2 H(+). It carries out the reaction H2O2 + AH2 = A + 2 H2O. Its function is as follows. Monomeric heme protein which primary function is to store oxygen and facilitate its diffusion within muscle tissues. Reversibly binds oxygen through a pentacoordinated heme iron and enables its timely and efficient release as needed during periods of heightened demand. Depending on the oxidative conditions of tissues and cells, and in addition to its ability to bind oxygen, it also has a nitrite reductase activity whereby it regulates the production of bioactive nitric oxide. Under stress conditions, like hypoxia and anoxia, it also protects cells against reactive oxygen species thanks to its pseudoperoxidase activity. The chain is Myoglobin (MB) from Saimiri sciureus (Common squirrel monkey).